A 241-amino-acid polypeptide reads, in one-letter code: Carboxy-S-adenosyl-L-methionine synthase (241 aa).

S-adenosyl-L-methionine is bound by residues Tyr38, 63–65 (GCS), 88–89 (DN), 116–117 (DI), Asn131, and Arg198.

Belongs to the class I-like SAM-binding methyltransferase superfamily. Cx-SAM synthase family. As to quaternary structure, homodimer.

The enzyme catalyses prephenate + S-adenosyl-L-methionine = carboxy-S-adenosyl-L-methionine + 3-phenylpyruvate + H2O. Functionally, catalyzes the conversion of S-adenosyl-L-methionine (SAM) to carboxy-S-adenosyl-L-methionine (Cx-SAM). The protein is Carboxy-S-adenosyl-L-methionine synthase of Actinobacillus pleuropneumoniae serotype 5b (strain L20).